The chain runs to 780 residues: B3 domain-containing transcription repressor VAL2 (780 aa).

Positions phenylalanine 286 to threonine 387 form a DNA-binding region, TF-B3. The CW-type zinc finger occupies threonine 515 to proline 565. Zn(2+) contacts are provided by cysteine 524, cysteine 527, cysteine 545, and cysteine 557. Disordered regions lie at residues glutamate 577–threonine 608, lysine 669–glutamate 695, and asparagine 743–asparagine 780. Positions alanine 584–glycine 603 are enriched in polar residues. The span at glutamate 674 to serine 686 shows a compositional bias: low complexity. Polar residues predominate over residues asparagine 743 to glutamine 765.

Its subcellular location is the nucleus. Functionally, transcriptional repressor of gene expression involved in embryonic pathways, such as LEC1, ABI3, and FUS3. Repressor of the sugar-inducible genes involved in the seed maturation program in seedlings. Plays an essential role in regulating the transition from seed maturation to seedling growth. Functionally redundant with VAL1/HSI2. The polypeptide is B3 domain-containing transcription repressor VAL2 (VAL2) (Arabidopsis thaliana (Mouse-ear cress)).